We begin with the raw amino-acid sequence, 582 residues long: 2-isopropylmalate synthase (582 aa).

Residues 40–314 (PRWCAVDLRD…DPMIDFSDID (275 aa)) form the Pyruvate carboxyltransferase domain. Mg(2+) is bound by residues D49, H253, H255, and N289. Positions 456–582 (SPAGHPGGQW…NRAIRDNQVD (127 aa)) are regulatory domain.

This sequence belongs to the alpha-IPM synthase/homocitrate synthase family. LeuA type 2 subfamily. In terms of assembly, homodimer. It depends on Mg(2+) as a cofactor.

The protein resides in the cytoplasm. It carries out the reaction 3-methyl-2-oxobutanoate + acetyl-CoA + H2O = (2S)-2-isopropylmalate + CoA + H(+). The protein operates within amino-acid biosynthesis; L-leucine biosynthesis; L-leucine from 3-methyl-2-oxobutanoate: step 1/4. In terms of biological role, catalyzes the condensation of the acetyl group of acetyl-CoA with 3-methyl-2-oxobutanoate (2-ketoisovalerate) to form 3-carboxy-3-hydroxy-4-methylpentanoate (2-isopropylmalate). This is 2-isopropylmalate synthase from Renibacterium salmoninarum (strain ATCC 33209 / DSM 20767 / JCM 11484 / NBRC 15589 / NCIMB 2235).